The following is a 160-amino-acid chain: Cytochrome b6-f complex subunit 4 (160 aa).

Helical transmembrane passes span 36 to 56, 95 to 115, and 131 to 151; these read LLYIFPVVILGTIACNVGLAV, LLGVLLMVSVPAGLLTVPFLE, and TVFLIGTAAALWLGIGATLPI.

This sequence belongs to the cytochrome b family. PetD subfamily. The 4 large subunits of the cytochrome b6-f complex are cytochrome b6, subunit IV (17 kDa polypeptide, petD), cytochrome f and the Rieske protein, while the 4 small subunits are petG, petL, petM and petN. The complex functions as a dimer.

The protein localises to the plastid. The protein resides in the chloroplast thylakoid membrane. Functionally, component of the cytochrome b6-f complex, which mediates electron transfer between photosystem II (PSII) and photosystem I (PSI), cyclic electron flow around PSI, and state transitions. The sequence is that of Cytochrome b6-f complex subunit 4 from Arabidopsis thaliana (Mouse-ear cress).